The sequence spans 588 residues: Adenine deaminase (588 aa).

This sequence belongs to the metallo-dependent hydrolases superfamily. Adenine deaminase family. In terms of assembly, homodimer. Requires Mn(2+) as cofactor.

It carries out the reaction adenine + H2O + H(+) = hypoxanthine + NH4(+). In Escherichia coli O157:H7 (strain EC4115 / EHEC), this protein is Adenine deaminase.